The following is a 267-amino-acid chain: Glucosamine-6-phosphate deaminase (267 aa).

Asp72 (proton acceptor; for enolization step) is an active-site residue. Asp141 functions as the For ring-opening step in the catalytic mechanism. His143 (proton acceptor; for ring-opening step) is an active-site residue. Catalysis depends on Glu148, which acts as the For ring-opening step.

It belongs to the glucosamine/galactosamine-6-phosphate isomerase family. NagB subfamily.

It catalyses the reaction alpha-D-glucosamine 6-phosphate + H2O = beta-D-fructose 6-phosphate + NH4(+). Its pathway is amino-sugar metabolism; N-acetylneuraminate degradation; D-fructose 6-phosphate from N-acetylneuraminate: step 5/5. With respect to regulation, allosterically activated by N-acetylglucosamine 6-phosphate (GlcNAc6P). Functionally, catalyzes the reversible isomerization-deamination of glucosamine 6-phosphate (GlcN6P) to form fructose 6-phosphate (Fru6P) and ammonium ion. The polypeptide is Glucosamine-6-phosphate deaminase (Borrelia hermsii (strain HS1 / DAH)).